Consider the following 254-residue polypeptide: Pimeloyl-[acyl-carrier protein] methyl ester esterase (254 aa).

Positions 14-242 constitute an AB hydrolase-1 domain; that stretch reads LVLLHGWGMN…ASHAPFISHP (229 aa). Residues Trp20, 82–83, and 143–147 each bind substrate; these read SL and FLAIQ. The active-site Nucleophile is Ser82. Active-site residues include Asp207 and His235. Position 235 (His235) interacts with substrate.

It belongs to the AB hydrolase superfamily. Carboxylesterase BioH family. As to quaternary structure, monomer.

It is found in the cytoplasm. It carries out the reaction 6-carboxyhexanoyl-[ACP] methyl ester + H2O = 6-carboxyhexanoyl-[ACP] + methanol + H(+). Its pathway is cofactor biosynthesis; biotin biosynthesis. The physiological role of BioH is to remove the methyl group introduced by BioC when the pimeloyl moiety is complete. It allows to synthesize pimeloyl-ACP via the fatty acid synthetic pathway through the hydrolysis of the ester bonds of pimeloyl-ACP esters. The sequence is that of Pimeloyl-[acyl-carrier protein] methyl ester esterase from Aeromonas hydrophila subsp. hydrophila (strain ATCC 7966 / DSM 30187 / BCRC 13018 / CCUG 14551 / JCM 1027 / KCTC 2358 / NCIMB 9240 / NCTC 8049).